We begin with the raw amino-acid sequence, 440 residues long: FAD-dependent monooxygenase afoD (440 aa).

A helical transmembrane segment spans residues 10 to 30; the sequence is PLSIAIIGGGIIGLMTALGLL. Residues glutamate 41, leucine 145, and aspartate 320 each coordinate FAD. N-linked (GlcNAc...) asparagine glycosylation is present at asparagine 352.

The protein belongs to the paxM FAD-dependent monooxygenase family. It depends on FAD as a cofactor.

It is found in the membrane. Functionally, FAD-dependent monooxygenase; part of the gene cluster that mediates the biosynthesis of asperfuranone, a probable antitumor agent. The polyketide synthase afoG is responsible for producing the 3,5-dimethyloctadienone moiety from acetyl-CoA, three malonyl-CoA, and two S-adenosyl methionines (SAM). The 3,5-dimethyloctadienone moiety is then loaded onto the SAT domain of afoE and extended with four malonyl-CoA and one SAM, which leads to the formation of 2,4-dihydroxy-6-(5,7-dimethyl-2-oxo-trans-3-trans-5-nonadienyl)-3-methylbenzaldehyde (compound 2) after reductive release and aldol condensation. AfoD is the next enzyme in the biosynthesis sequence and hydroxylates the side chain at the benzylic position of compound 2. After benzylic hydroxylation, a furan ring is formed after five-member ring hemiacetal formation and water elimination. AfoF and afoC are proposed to oxidize the R-diketone proton and to reduce the unconjugated carbonyl group, respectively, to generate asperfuranone. Since no intermediates could be isolated from afoF and afoC deletants, the sequence of these two enzymes is not fully understood. Moreover, since afoC deletant still produces a small amount of asperfuranone, other endogenous oxidoreductases might catalyze the same reaction with much less efficiency. The chain is FAD-dependent monooxygenase afoD from Emericella nidulans (strain FGSC A4 / ATCC 38163 / CBS 112.46 / NRRL 194 / M139) (Aspergillus nidulans).